We begin with the raw amino-acid sequence, 315 residues long: Ribosomal RNA small subunit methyltransferase H (315 aa).

S-adenosyl-L-methionine is bound by residues 42 to 44 (GGH), Asp-59, Phe-96, Asp-108, and Gln-115.

This sequence belongs to the methyltransferase superfamily. RsmH family.

The protein localises to the cytoplasm. The catalysed reaction is cytidine(1402) in 16S rRNA + S-adenosyl-L-methionine = N(4)-methylcytidine(1402) in 16S rRNA + S-adenosyl-L-homocysteine + H(+). Specifically methylates the N4 position of cytidine in position 1402 (C1402) of 16S rRNA. The protein is Ribosomal RNA small subunit methyltransferase H of Gemmatimonas aurantiaca (strain DSM 14586 / JCM 11422 / NBRC 100505 / T-27).